The chain runs to 226 residues: Enolase-phosphatase E1 (226 aa).

The protein belongs to the HAD-like hydrolase superfamily. MasA/MtnC family. As to quaternary structure, monomer. It depends on Mg(2+) as a cofactor.

It catalyses the reaction 5-methylsulfanyl-2,3-dioxopentyl phosphate + H2O = 1,2-dihydroxy-5-(methylsulfanyl)pent-1-en-3-one + phosphate. It participates in amino-acid biosynthesis; L-methionine biosynthesis via salvage pathway; L-methionine from S-methyl-5-thio-alpha-D-ribose 1-phosphate: step 3/6. Its pathway is amino-acid biosynthesis; L-methionine biosynthesis via salvage pathway; L-methionine from S-methyl-5-thio-alpha-D-ribose 1-phosphate: step 4/6. In terms of biological role, bifunctional enzyme that catalyzes the enolization of 2,3-diketo-5-methylthiopentyl-1-phosphate (DK-MTP-1-P) into the intermediate 2-hydroxy-3-keto-5-methylthiopentenyl-1-phosphate (HK-MTPenyl-1-P), which is then dephosphorylated to form the acireductone 1,2-dihydroxy-3-keto-5-methylthiopentene (DHK-MTPene). This Shewanella sp. (strain ANA-3) protein is Enolase-phosphatase E1.